Here is a 400-residue protein sequence, read N- to C-terminus: Argininosuccinate synthase (400 aa).

Residues 10–18 (AYSGGVDTS) and Ala-38 each bind ATP. Tyr-89 contributes to the L-citrulline binding site. Gly-119 is a binding site for ATP. Residues Thr-121, Asn-125, and Asp-126 each contribute to the L-aspartate site. An L-citrulline-binding site is contributed by Asn-125. L-citrulline is bound by residues Arg-129, Ser-177, Ser-186, Glu-262, and Tyr-274.

This sequence belongs to the argininosuccinate synthase family. Type 1 subfamily. Homotetramer.

It localises to the cytoplasm. It catalyses the reaction L-citrulline + L-aspartate + ATP = 2-(N(omega)-L-arginino)succinate + AMP + diphosphate + H(+). Its pathway is amino-acid biosynthesis; L-arginine biosynthesis; L-arginine from L-ornithine and carbamoyl phosphate: step 2/3. The protein is Argininosuccinate synthase of Synechococcus elongatus (strain ATCC 33912 / PCC 7942 / FACHB-805) (Anacystis nidulans R2).